The chain runs to 358 residues: Protein ttm-2 (358 aa).

This sequence belongs to the arrestin family.

Its function is as follows. Involved in resistance to B.thuringiensis pore-forming toxin Cry5B downstream of the sek-1 and pmk-1 MAPK kinase pathway. The protein is Protein ttm-2 of Caenorhabditis elegans.